A 602-amino-acid polypeptide reads, in one-letter code: DEAD-box ATP-dependent RNA helicase 52A (602 aa).

The segment at 9-31 is disordered; it reads KSVEAGGEPGGGGGGAWSTVSRS. The segment covering 15–24 has biased composition (gly residues); the sequence is GEPGGGGGGA. Positions 84–112 match the Q motif motif; it reads DGFEAAGLVEAVLRNVARCGYESPTPVQR. The Helicase ATP-binding domain maps to 115-305; that stretch reads MPIALAGRDL…SDFLSNYIFI (191 aa). 128 to 135 is a binding site for ATP; the sequence is AQTGSGKT. The DEAD box motif lies at 249–252; sequence DEAD. A Helicase C-terminal domain is found at 328-485; that stretch reads EKRGYLLDLL…DVPDWLVQYA (158 aa). Disordered regions lie at residues 492 to 521 and 552 to 602; these read GSSY…SGGG and RGGG…SGWD. Residues 552–574 show a composition bias toward gly residues; that stretch reads RGGGYSRGGRGGYSGGGGGGGGD.

Belongs to the DEAD box helicase family. DDX3/DED1 subfamily.

It catalyses the reaction ATP + H2O = ADP + phosphate + H(+). The polypeptide is DEAD-box ATP-dependent RNA helicase 52A (Oryza sativa subsp. japonica (Rice)).